The sequence spans 159 residues: Vesicle transport protein SFT2A (159 aa).

Topologically, residues 1-36 are cytoplasmic; it reads MEKLRRVLSGQDDEEQGLTAQVLDASSLSFNTRLKW. Serine 9 carries the post-translational modification Phosphoserine. The chain crosses the membrane as a helical span at residues 37-57; sequence FAICFVCGVFFSILGTGLLWL. Residues 58–62 lie on the Lumenal side of the membrane; it reads PGGIK. Residues 63–83 traverse the membrane as a helical segment; that stretch reads LFAVFYTLGNLAALASTCFLM. The Cytoplasmic portion of the chain corresponds to 84 to 97; that stretch reads GPVKQLKKMFEATR. Residues 98-118 traverse the membrane as a helical segment; the sequence is LLATIVMLLCFIFTLCAALWW. The Lumenal segment spans residues 119–122; the sequence is HKKG. A helical membrane pass occupies residues 123–143; it reads LAVLFCILQFLSMTWYSLSYI. Topologically, residues 144-159 are cytoplasmic; sequence PYARDAVIKCCSSLLS.

This sequence belongs to the SFT2 family.

The protein resides in the membrane. Functionally, may be involved in fusion of retrograde transport vesicles derived from an endocytic compartment with the Golgi complex. The sequence is that of Vesicle transport protein SFT2A from Homo sapiens (Human).